Reading from the N-terminus, the 497-residue chain is UDP-N-acetylmuramoyl-L-alanyl-D-glutamate--2,6-diaminopimelate ligase (497 aa).

Ser-33 serves as a coordination point for UDP-N-acetyl-alpha-D-muramoyl-L-alanyl-D-glutamate. 119–125 lines the ATP pocket; it reads GTNGKTT. UDP-N-acetyl-alpha-D-muramoyl-L-alanyl-D-glutamate-binding positions include 161 to 162, Ser-188, Gln-194, and Arg-196; that span reads TT. An N6-carboxylysine modification is found at Lys-228. Meso-2,6-diaminopimelate contacts are provided by residues Arg-390, 414-417, Gly-465, and Glu-469; that span reads DNPR. The short motif at 414–417 is the Meso-diaminopimelate recognition motif element; the sequence is DNPR.

The protein belongs to the MurCDEF family. MurE subfamily. The cofactor is Mg(2+). In terms of processing, carboxylation is probably crucial for Mg(2+) binding and, consequently, for the gamma-phosphate positioning of ATP.

The protein resides in the cytoplasm. The enzyme catalyses UDP-N-acetyl-alpha-D-muramoyl-L-alanyl-D-glutamate + meso-2,6-diaminopimelate + ATP = UDP-N-acetyl-alpha-D-muramoyl-L-alanyl-gamma-D-glutamyl-meso-2,6-diaminopimelate + ADP + phosphate + H(+). The protein operates within cell wall biogenesis; peptidoglycan biosynthesis. Catalyzes the addition of meso-diaminopimelic acid to the nucleotide precursor UDP-N-acetylmuramoyl-L-alanyl-D-glutamate (UMAG) in the biosynthesis of bacterial cell-wall peptidoglycan. In Synechococcus elongatus (strain ATCC 33912 / PCC 7942 / FACHB-805) (Anacystis nidulans R2), this protein is UDP-N-acetylmuramoyl-L-alanyl-D-glutamate--2,6-diaminopimelate ligase.